The chain runs to 386 residues: MKGIFPIDKFRTLQTPFYYYDTKVLRDTLSAINQEVAKYPSYSVHYAVKANANPKVLTIIRESGMGADCVSGGEIRAAVRAGFPANKIVFAGVGKADWEINLGLEYGIFCFNVESIPELEVINELAAAQNKIANVAFRINPDVGAHTHANITTGLAENKFGISMQDMDRVIDVALEMKNVKFIGLHFHIGSQILDMGDFIALCNRVNELQDKLEARRILVEHINVGGGLGIDYGHPNRQSVPDFKSYFATYAGQLKLRPYQTLHFELGRAVVGQCGSLISKVLYVKQGTKKKFAILDAGMTDLIRPALYQAYHKMENITSEEPVEAYDVVGPICESSDVFGKAIDLNKVKRGDLIALRSAGAYGEIMASGYNCRELPKGYTSDELV.

At Lys-49 the chain carries N6-(pyridoxal phosphate)lysine. Pyridoxal 5'-phosphate-binding positions include Gly-228 and 266–269; that span reads ELGR. Substrate contacts are provided by Arg-269, Arg-305, Tyr-309, Glu-335, and Tyr-363. Tyr-363 contributes to the pyridoxal 5'-phosphate binding site.

The protein belongs to the Orn/Lys/Arg decarboxylase class-II family. LysA subfamily. As to quaternary structure, homodimer. Requires pyridoxal 5'-phosphate as cofactor.

It catalyses the reaction meso-2,6-diaminopimelate + H(+) = L-lysine + CO2. The protein operates within amino-acid biosynthesis; L-lysine biosynthesis via DAP pathway; L-lysine from DL-2,6-diaminopimelate: step 1/1. Functionally, specifically catalyzes the decarboxylation of meso-diaminopimelate (meso-DAP) to L-lysine. In Bacteroides thetaiotaomicron (strain ATCC 29148 / DSM 2079 / JCM 5827 / CCUG 10774 / NCTC 10582 / VPI-5482 / E50), this protein is Diaminopimelate decarboxylase.